The following is a 205-amino-acid chain: MKLVLASNNRGKLAELQAMLAPLGVQLIPQAELGVGEAEEPFHTFVENALAKARFASAHTGLPALADDAGLCVQAFGGQPGVQTAYYATQFGYDKGDANNVRALLEQMQGIDDRRAAMVSTLVAVRSPQDPEPLIAVGRVAGEIARAPRGTGGFGFDPVMVLPAFGKTFAELPPEVKNAHSHRGRSSRQMLELMREHWFAGTSER.

Residue 7 to 12 (SNNRGK) coordinates substrate. Residues E39 and D68 each coordinate Mg(2+). D68 serves as the catalytic Proton acceptor. Substrate-binding positions include A69, 154 to 157 (FGFD), K177, and 182 to 183 (HR).

It belongs to the HAM1 NTPase family. Homodimer. The cofactor is Mg(2+).

It carries out the reaction XTP + H2O = XMP + diphosphate + H(+). The catalysed reaction is dITP + H2O = dIMP + diphosphate + H(+). The enzyme catalyses ITP + H2O = IMP + diphosphate + H(+). Pyrophosphatase that catalyzes the hydrolysis of nucleoside triphosphates to their monophosphate derivatives, with a high preference for the non-canonical purine nucleotides XTP (xanthosine triphosphate), dITP (deoxyinosine triphosphate) and ITP. Seems to function as a house-cleaning enzyme that removes non-canonical purine nucleotides from the nucleotide pool, thus preventing their incorporation into DNA/RNA and avoiding chromosomal lesions. This is dITP/XTP pyrophosphatase from Acidovorax ebreus (strain TPSY) (Diaphorobacter sp. (strain TPSY)).